Consider the following 426-residue polypeptide: Maintenance of mitochondrial morphology protein 1 (426 aa).

At 1–100 (MTDSENESTE…KFSGWSFAQG (100 aa)) the chain is on the lumenal side. A helical membrane pass occupies residues 101-121 (FFVGQLSIVLLFIFFLKFFIF). Topologically, residues 122 to 426 (SDEPSKSKNP…NTREEKPTEL (305 aa)) are cytoplasmic. One can recognise an SMP-LTD domain in the interval 194–409 (PAESLDWFNV…EPRFQFVRLP (216 aa)).

This sequence belongs to the MMM1 family. Homodimer. Component of the ER-mitochondria encounter structure (ERMES) or MDM complex, composed of MMM1, MDM10, MDM12 and MDM34. An MMM1 homodimer associates with one molecule of MDM12 on each side in a pairwise head-to-tail manner, and the SMP-LTD domains of MMM1 and MDM12 generate a continuous hydrophobic tunnel for phospholipid trafficking.

Its subcellular location is the endoplasmic reticulum membrane. Functionally, component of the ERMES/MDM complex, which serves as a molecular tether to connect the endoplasmic reticulum (ER) and mitochondria. Components of this complex are involved in the control of mitochondrial shape and protein biogenesis, and function in nonvesicular lipid trafficking between the ER and mitochondria. The MDM12-MMM1 subcomplex functions in the major beta-barrel assembly pathway that is responsible for biogenesis of all outer membrane beta-barrel proteins, and acts in a late step after the SAM complex. The MDM10-MDM12-MMM1 subcomplex further acts in the TOM40-specific pathway after the action of the MDM12-MMM1 complex. Essential for establishing and maintaining the structure of mitochondria and maintenance of mtDNA nucleoids. This Saccharomyces cerevisiae (strain AWRI1631) (Baker's yeast) protein is Maintenance of mitochondrial morphology protein 1.